The chain runs to 472 residues: MAQANFGVVGMAVMGKNLALNVESRGYTVAIYNRTTSKTEEVYKEHQDKNLVFTKTLEEFVGSLEKPRRIMLMVQAGAATDATIKSLLPLLDIGDILIDGGNTHFPDTMRRNAELADSGINFIGTGVSGGEKGALLGPSMMPGGQKEAYDLVAPIFEQIAAKAPQDGKPCVAYMGANGAGHYVKMVHNGIEYGDMQLIAESYDLLKRILGLSNAEIQAIFEEWNEGELDSYLIEITKEVLKRKDDEGEGYIVDKILDKAGNKGTGKWTSESALDLGVPLPLITESVFARYISTYKDERVKASKVLSGPALDFSGDKKEVIEKIRKALYFSKIMSYAQGFAQLRKASEEFDWDLPYGTIAQIWRAGCIIRAEFLQNITDAFDKDSELENLLLDDYFVDITKRYQEAVRDVVSLAVQAGTPIPTFTSAISYYDSYRSENLPANLIQAQRDYFGAHTYERTDKAGIFHYDWYTED.

NADP(+)-binding positions include 10-15, 33-35, 74-76, and Asn-102; these read GMAVMG, NRT, and VQA. Substrate contacts are provided by residues Asn-102 and 128-130; that span reads SGG. Residue Lys-184 is the Proton acceptor of the active site. 187–188 contributes to the substrate binding site; the sequence is HN. Glu-191 serves as the catalytic Proton donor. Substrate-binding residues include Tyr-192, Lys-262, Arg-289, Arg-447, and His-453.

It belongs to the 6-phosphogluconate dehydrogenase family. Homodimer.

The catalysed reaction is 6-phospho-D-gluconate + NADP(+) = D-ribulose 5-phosphate + CO2 + NADPH. It participates in carbohydrate degradation; pentose phosphate pathway; D-ribulose 5-phosphate from D-glucose 6-phosphate (oxidative stage): step 3/3. Its function is as follows. Catalyzes the oxidative decarboxylation of 6-phosphogluconate to ribulose 5-phosphate and CO(2), with concomitant reduction of NADP to NADPH. In Lactococcus lactis subsp. cremoris (strain MG1363), this protein is 6-phosphogluconate dehydrogenase, decarboxylating (gnd).